The chain runs to 1627 residues: MGFSTADGGGGPGARDLESLDACIQRTLSALYPPFEATAATVLWQLFSVAERCHGGDGLHCLTSFLLPAKRALQHLQQEACARYRGLVFLHPGWPLCAHEKVVVQLASLHGVRLQPGDFYLQVTSAGKQSARLVLKCLSRLGRGTEEVTVPEAMYGCVFTGAFLEWVNRERRHVPLQTCLLTSGLAVHRAPWSDVTDPVFVPSPGAILQSYSSCTGPERLPSSPSEAPVPTQATAGPHFQGSASCPDTLTSPCRRGHTGSDQLRHLPYPERAELGSPRTLSGSSDRDFEKVSPSEQGPRMPPENCGGSGERPDPMDQEDRPKALTFHTDLGIPSSRRRPPGDPTCVQPRRWFRESYMEALRNPMPLGSSEEALGDLACSSLTGASRDLGTGAVASGTQEETSGPRGDPQQTPSLEKERHTPSRTGPGAAGRTLPRRSRSWERAPRSSRGAQAAACHTSHHSAGSRPGGHLGGQAVGTPNCVPVEGPGCTKEEDVLASSACVSTDGGSLHCHNPSGPSDVPARQPHPEQEGWPPGTGDFPSQVPKQVLDVSQELLQSGVVTLPGTRDRHGRAVVQVRTRSLLWTREHSSCAELTRLLLYFHSIPRKEVRDLGLVVLVDARRSPAAPAVSQALSGLQNNTSPIIHSILLLVDKESAFRPDKDAIIQCEVVSSLKAVHKFVDSCQLTADLDGSFPYSHGDWICFRQRLEHFAANCEEAIIFLQNSFCSLNTHRTPRTAQEVAELIDQHETMMKLVLEDPLLVSLRLEGGTVLARLRREELGTEDSRDTLEAATSLYDRVDEEVHRLVLTSNNRLQQLEHLRELASLLEGNDQQSCQKGLQLAKENPQRTEEMVQDFRRGLSAVVSQAECREGELARWTRSSELCETVSSWMGPLDPEACPSSPVAECLRSCHQEATSVAAEAFPGAGVAVLKPHALGKPWASQQDLWLQYPQTRLRLEEALSEAAPDPSLPPLAQSPPKHERAQEAMRRHQKPPSFPSTDSGGGAWEPAQPLSGLPGRALLCGQDGETLRPGLCALWDPLSLLRGLPGAGATTAHLEDSSACSSEPTQTLASRPRKHPQKKMIKKTQSFEIPQPDSGPRDSCQPDHTSVFSKGLEVTSTVATEKKLPLWQHARSPPVTQSRSLSSPSGLHPAEEDGRQQVGSSRLRHIMAEMIATEREYIRCLGYVIDNYFPEMERMDLPQGLRGKHHVIFGNLEKLHDFHQQHFLRELERCQHCPLAVGRSFLRHEEQFGMYVIYSKNKPQSDALLSSHGNAFFKDKQRELGDKMDLASYLLRPVQRVAKYALLLQDLLKEASCGLAQGQELGELRAAEVVVCFQLRHGNDLLAMDAIRGCDVNLKEQGQLRCRDEFIVCCGRKKYLRHVFLFEDLILFSKTQKVEGSHDVYLYKQSFKTAEIGMTENVGDSGLRFEIWFRRRRKSQDTYILQASSAEVKSAWTDVIGRILWRQALKSRELRIQEMASMGIGNQPFMDVKPRDRTPDCAVISDRAPKCAVMSDRVPDSIVKGTESQMRGSTAVSSSDHAAPFKRPHSTISDSSTSSSSSQSSSILGSLGLLVSSSPAHPGLWSPAHSPWSSDIRACVEEDEPEPELETGTQAAVCEGAPAVLLSRTRQA.

6 disordered regions span residues 211 to 349 (YSSC…VQPR), 381 to 475 (LTGA…GQAV), 501 to 537 (VSTDGGSLHCHNPSGPSDVPARQPHPEQEGWPPGTGD), 959 to 1008 (SEAA…PAQP), 1049 to 1111 (TTAH…SKGL), and 1124 to 1159 (PLWQHARSPPVTQSRSLSSPSGLHPAEEDGRQQVGS). Residues 241-251 (GSASCPDTLTS) show a composition bias toward polar residues. 2 stretches are compositionally biased toward basic and acidic residues: residues 262–273 (QLRHLPYPERAE) and 310–322 (ERPDPMDQEDRPK). A compositionally biased stretch (gly residues) spans 465–474 (RPGGHLGGQA). Over residues 975 to 985 (PKHERAQEAMR) the composition is skewed to basic and acidic residues. A compositionally biased stretch (polar residues) spans 1057 to 1068 (SACSSEPTQTLA). The span at 1070-1081 (RPRKHPQKKMIK) shows a compositional bias: basic residues. 2 stretches are compositionally biased toward polar residues: residues 1101-1111 (PDHTSVFSKGL) and 1133-1144 (PVTQSRSLSSPS). One can recognise a DH domain in the interval 1161–1340 (RLRHIMAEMI…CFQLRHGNDL (180 aa)). The PH domain occupies 1352–1460 (NLKEQGQLRC…WTDVIGRILW (109 aa)). The segment at 1519 to 1558 (KGTESQMRGSTAVSSSDHAAPFKRPHSTISDSSTSSSSSQ) is disordered. Residues 1521 to 1535 (TESQMRGSTAVSSSD) are compositionally biased toward polar residues. Positions 1545–1558 (STISDSSTSSSSSQ) are enriched in low complexity.

In terms of assembly, found in a complex with ARHGEF11 and ARHGEF12; binding to ARHGEF11 and ARHGEF12 enhances CDC42 GEF activity of PLEKHG4B, and PLEKHG4B, in turn, inhibits ARHGEF11- and ARHGEF12-mediated RHOA activation. Interacts with ANXA2; this interaction is required for PLEKHG4B localization to cell-cell adhesions.

It is found in the basal cell membrane. The protein localises to the cell junction. It localises to the nucleus. Its subcellular location is the cytoplasm. Functionally, guanine nucleotide exchange factor (GEF) which specifically activates small GTPase CDC42 by exchanging bound GDP for free GTP. Plays a role in actin cytoskeletal remodeling in the late stage of cell-cell junction formation by regulating the contractility of actin filaments, which prompts the conversion from 'open' to 'closed' junctions. The chain is Pleckstrin homology domain-containing family G member 4B from Homo sapiens (Human).